The following is a 62-amino-acid chain: DNA-directed RNA polymerase subunit Rpo10 (62 aa).

Zn(2+)-binding residues include Cys-6, Cys-9, Cys-43, and Cys-44.

This sequence belongs to the archaeal Rpo10/eukaryotic RPB10 RNA polymerase subunit family. Part of the RNA polymerase complex. It depends on Zn(2+) as a cofactor.

It is found in the cytoplasm. It catalyses the reaction RNA(n) + a ribonucleoside 5'-triphosphate = RNA(n+1) + diphosphate. DNA-dependent RNA polymerase (RNAP) catalyzes the transcription of DNA into RNA using the four ribonucleoside triphosphates as substrates. In Methanococcoides burtonii (strain DSM 6242 / NBRC 107633 / OCM 468 / ACE-M), this protein is DNA-directed RNA polymerase subunit Rpo10.